A 294-amino-acid polypeptide reads, in one-letter code: Octopine-binding periplasmic protein (294 aa).

Positions 1–20 (MRLKSIMCAALFVVAGQAAA) are cleaved as a signal peptide. A disulfide bridge connects residues C57 and C64.

This sequence belongs to the bacterial solute-binding protein 3 family.

Its subcellular location is the periplasm. In terms of biological role, component of the octopine active transport system probably consisting of four subunits: Q, M, P and T. The protein is Octopine-binding periplasmic protein (occT) of Rhizobium meliloti (Ensifer meliloti).